Consider the following 88-residue polypeptide: Small ribosomal subunit protein uS17 (88 aa).

The protein belongs to the universal ribosomal protein uS17 family. In terms of assembly, part of the 30S ribosomal subunit.

Functionally, one of the primary rRNA binding proteins, it binds specifically to the 5'-end of 16S ribosomal RNA. The chain is Small ribosomal subunit protein uS17 from Pseudomonas fluorescens (strain ATCC BAA-477 / NRRL B-23932 / Pf-5).